The primary structure comprises 135 residues: Lymphocyte antigen 6B (135 aa).

The signal sequence occupies residues 1 to 26; the sequence is MNRSCAMKSCVLILLLALLCAERAQG. The UPAR/Ly6 domain occupies 27 to 119; the sequence is LNCYNCTMIP…PTGGSTWTMA (93 aa). Intrachain disulfides connect Cys-29/Cys-54, Cys-32/Cys-41, Cys-47/Cys-75, Cys-79/Cys-99, and Cys-100/Cys-105. Residue Gly-113 is the site of GPI-anchor amidated glycine attachment. A propeptide spans 114 to 135 (removed in mature form); that stretch reads STWTMAGVLLFILGSVLLQTLL.

The protein resides in the cell membrane. In Rattus norvegicus (Rat), this protein is Lymphocyte antigen 6B (Ly6b).